Here is a 148-residue protein sequence, read N- to C-terminus: Ferredoxin-thioredoxin reductase catalytic chain, chloroplastic (148 aa).

Residues 1–35 (MKALQASTSYSFFSKSSSATLQRRTHRPQCVILSK) constitute a chloroplast transit peptide. C87 serves as a coordination point for [4Fe-4S] cluster. Catalysis depends on C89, which acts as the Nucleophile. Cysteines 89 and 119 form a disulfide. [4Fe-4S] cluster-binding residues include C106, C108, and C117.

Belongs to the ferredoxin thioredoxin reductase beta subunit family. As to quaternary structure, heterodimer of subunit A (variable subunit) and subunit B (catalytic subunit). Heterodimeric FTR forms a complex with ferredoxin and thioredoxin. The cofactor is [4Fe-4S] cluster.

It localises to the plastid. It is found in the chloroplast. It carries out the reaction [thioredoxin]-disulfide + 2 reduced [2Fe-2S]-[ferredoxin] + 2 H(+) = [thioredoxin]-dithiol + 2 oxidized [2Fe-2S]-[ferredoxin]. In terms of biological role, catalytic subunit of the ferredoxin-thioredoxin reductase (FTR), which catalyzes the two-electron reduction of thioredoxins by the electrons provided by reduced ferredoxin. In Spinacia oleracea (Spinach), this protein is Ferredoxin-thioredoxin reductase catalytic chain, chloroplastic.